The chain runs to 80 residues: Translation initiation factor IF-1, chloroplastic (80 aa).

Residues 1 to 74 (MKEQKWIHEG…TRGRIIYRLR (74 aa)) form the S1-like domain.

This sequence belongs to the IF-1 family. As to quaternary structure, component of the 30S ribosomal translation pre-initiation complex which assembles on the 30S ribosome in the order IF-2 and IF-3, IF-1 and N-formylmethionyl-tRNA(fMet); mRNA recruitment can occur at any time during PIC assembly.

The protein resides in the plastid. Its subcellular location is the chloroplast. Its function is as follows. One of the essential components for the initiation of protein synthesis. Stabilizes the binding of IF-2 and IF-3 on the 30S subunit to which N-formylmethionyl-tRNA(fMet) subsequently binds. Helps modulate mRNA selection, yielding the 30S pre-initiation complex (PIC). Upon addition of the 50S ribosomal subunit IF-1, IF-2 and IF-3 are released leaving the mature 70S translation initiation complex. The protein is Translation initiation factor IF-1, chloroplastic of Illicium oligandrum (Star anise).